The chain runs to 239 residues: Uridylate kinase (239 aa).

Residue 12–15 participates in ATP binding; the sequence is KLSG. Residues 21-26 are involved in allosteric activation by GTP; sequence GEQGFG. Glycine 55 contacts UMP. Residues glycine 56 and arginine 60 each contribute to the ATP site. UMP contacts are provided by residues aspartate 75 and 136-143; that span reads TGNPYFST. ATP contacts are provided by threonine 163, tyrosine 169, and aspartate 172.

Belongs to the UMP kinase family. In terms of assembly, homohexamer.

The protein resides in the cytoplasm. It catalyses the reaction UMP + ATP = UDP + ADP. The protein operates within pyrimidine metabolism; CTP biosynthesis via de novo pathway; UDP from UMP (UMPK route): step 1/1. Allosterically activated by GTP. Inhibited by UTP. Catalyzes the reversible phosphorylation of UMP to UDP. The polypeptide is Uridylate kinase (Koribacter versatilis (strain Ellin345)).